The following is a 614-amino-acid chain: Probable Xaa-Pro aminopeptidase P (614 aa).

Mn(2+)-binding residues include Asp409, Asp420, Glu518, and Glu532.

Belongs to the peptidase M24B family. The cofactor is Mn(2+).

It carries out the reaction Release of any N-terminal amino acid, including proline, that is linked to proline, even from a dipeptide or tripeptide.. Its function is as follows. Catalyzes the removal of a penultimate prolyl residue from the N-termini of peptides. This Aspergillus niger (strain ATCC MYA-4892 / CBS 513.88 / FGSC A1513) protein is Probable Xaa-Pro aminopeptidase P (ampp).